The chain runs to 252 residues: Uridylate kinase (252 aa).

Residue 24-27 (KLSG) participates in ATP binding. Residues 32 to 37 (GEEGFG) are involved in allosteric activation by GTP. G66 contacts UMP. ATP-binding residues include G67 and R71. UMP contacts are provided by residues D86 and 147–154 (TGNPFFTT). 3 residues coordinate ATP: T174, Y180, and D183.

This sequence belongs to the UMP kinase family. In terms of assembly, homohexamer.

It is found in the cytoplasm. The enzyme catalyses UMP + ATP = UDP + ADP. It participates in pyrimidine metabolism; CTP biosynthesis via de novo pathway; UDP from UMP (UMPK route): step 1/1. Its activity is regulated as follows. Allosterically activated by GTP. Inhibited by UTP. Catalyzes the reversible phosphorylation of UMP to UDP. The sequence is that of Uridylate kinase from Alcanivorax borkumensis (strain ATCC 700651 / DSM 11573 / NCIMB 13689 / SK2).